Reading from the N-terminus, the 516-residue chain is Tyrosine decarboxylase 3 (516 aa).

Lys-319 is modified (N6-(pyridoxal phosphate)lysine).

This sequence belongs to the group II decarboxylase family. Homodimer. It depends on pyridoxal 5'-phosphate as a cofactor.

The catalysed reaction is L-tyrosine + H(+) = tyramine + CO2. This chain is Tyrosine decarboxylase 3 (TYRDC-3), found in Petroselinum crispum (Parsley).